The primary structure comprises 142 residues: Putative FK506-binding protein 9-like protein (142 aa).

The 49-residue stretch at 1–49 folds into the PPIase FKBP-type domain; it reads MDMGLREMCVGEKRTVIIPPHLGYGEAGVDGEVPGSAVLVFDIELLELV. EF-hand domains lie at 60-95 and 105-140; these read WNGE…QVAS and DAEL…AKQD. The Ca(2+) site is built by Asp118, Asn120, Asp122, Lys124, and Glu129.

In Homo sapiens (Human), this protein is Putative FK506-binding protein 9-like protein (FKBP9P1).